The following is a 344-amino-acid chain: N-acetyl-gamma-glutamyl-phosphate reductase (344 aa).

The active site involves cysteine 150.

Belongs to the NAGSA dehydrogenase family. Type 1 subfamily.

Its subcellular location is the cytoplasm. The enzyme catalyses N-acetyl-L-glutamate 5-semialdehyde + phosphate + NADP(+) = N-acetyl-L-glutamyl 5-phosphate + NADPH + H(+). The protein operates within amino-acid biosynthesis; L-arginine biosynthesis; N(2)-acetyl-L-ornithine from L-glutamate: step 3/4. Catalyzes the NADPH-dependent reduction of N-acetyl-5-glutamyl phosphate to yield N-acetyl-L-glutamate 5-semialdehyde. The protein is N-acetyl-gamma-glutamyl-phosphate reductase of Pseudomonas syringae pv. syringae (strain B728a).